Here is a 239-residue protein sequence, read N- to C-terminus: Geranylgeranylglyceryl phosphate synthase (239 aa).

Residue lysine 13 participates in sn-glycerol 1-phosphate binding. Aspartate 15 and threonine 42 together coordinate Mg(2+). Residues 162-167 (YIEYSG), glycine 192, and 212-213 (GD) each bind sn-glycerol 1-phosphate.

It belongs to the GGGP/HepGP synthase family. Group I subfamily. The cofactor is Mg(2+).

Its subcellular location is the cytoplasm. The catalysed reaction is sn-glycerol 1-phosphate + (2E,6E,10E)-geranylgeranyl diphosphate = sn-3-O-(geranylgeranyl)glycerol 1-phosphate + diphosphate. The protein operates within membrane lipid metabolism; glycerophospholipid metabolism. Functionally, prenyltransferase that catalyzes the transfer of the geranylgeranyl moiety of geranylgeranyl diphosphate (GGPP) to the C3 hydroxyl of sn-glycerol-1-phosphate (G1P). This reaction is the first ether-bond-formation step in the biosynthesis of archaeal membrane lipids. This chain is Geranylgeranylglyceryl phosphate synthase, found in Haloquadratum walsbyi (strain DSM 16790 / HBSQ001).